The primary structure comprises 513 residues: Meiotically up-regulated gene 133 protein (513 aa).

Belongs to the UPF0300 family.

The protein resides in the golgi apparatus. It is found in the vacuole membrane. Its function is as follows. Has a role in meiosis. In Schizosaccharomyces pombe (strain 972 / ATCC 24843) (Fission yeast), this protein is Meiotically up-regulated gene 133 protein (mug133).